The chain runs to 99 residues: Small ribosomal subunit protein bS18 (99 aa).

The protein belongs to the bacterial ribosomal protein bS18 family. Part of the 30S ribosomal subunit. Forms a tight heterodimer with protein bS6.

In terms of biological role, binds as a heterodimer with protein bS6 to the central domain of the 16S rRNA, where it helps stabilize the platform of the 30S subunit. This chain is Small ribosomal subunit protein bS18, found in Christiangramia forsetii (strain DSM 17595 / CGMCC 1.15422 / KT0803) (Gramella forsetii).